A 426-amino-acid polypeptide reads, in one-letter code: Glutamate-1-semialdehyde 2,1-aminomutase (426 aa).

K265 is subject to N6-(pyridoxal phosphate)lysine.

Belongs to the class-III pyridoxal-phosphate-dependent aminotransferase family. HemL subfamily. Homodimer. Pyridoxal 5'-phosphate is required as a cofactor.

Its subcellular location is the cytoplasm. The catalysed reaction is (S)-4-amino-5-oxopentanoate = 5-aminolevulinate. It functions in the pathway porphyrin-containing compound metabolism; protoporphyrin-IX biosynthesis; 5-aminolevulinate from L-glutamyl-tRNA(Glu): step 2/2. The polypeptide is Glutamate-1-semialdehyde 2,1-aminomutase (Cellvibrio japonicus (strain Ueda107) (Pseudomonas fluorescens subsp. cellulosa)).